Reading from the N-terminus, the 94-residue chain is Small ribosomal subunit protein uS19 (94 aa).

The protein belongs to the universal ribosomal protein uS19 family.

Its function is as follows. Protein S19 forms a complex with S13 that binds strongly to the 16S ribosomal RNA. The protein is Small ribosomal subunit protein uS19 of Endomicrobium trichonymphae.